Consider the following 77-residue polypeptide: MNVKVFRVSGYFEKNGRKFKFTKEYRALKEEHVKELVYSDIGSKHKVKRRKIFIKEIKEIRPEEAEDIVVRRLSLEL.

The protein belongs to the eukaryotic ribosomal protein eL20 family. As to quaternary structure, part of the 50S ribosomal subunit. Binds 23S rRNA.

The protein is Large ribosomal subunit protein eL20 of Pyrococcus abyssi (strain GE5 / Orsay).